Consider the following 103-residue polypeptide: Signal recognition particle 19 kDa protein (103 aa).

The protein belongs to the SRP19 family. As to quaternary structure, part of the signal recognition particle protein translocation system, which is composed of SRP and FtsY. Archaeal SRP consists of a 7S RNA molecule of 300 nucleotides and two protein subunits: SRP54 and SRP19.

The protein localises to the cytoplasm. Functionally, involved in targeting and insertion of nascent membrane proteins into the cytoplasmic membrane. Binds directly to 7S RNA and mediates binding of the 54 kDa subunit of the SRP. The polypeptide is Signal recognition particle 19 kDa protein (Methanopyrus kandleri (strain AV19 / DSM 6324 / JCM 9639 / NBRC 100938)).